Here is a 1287-residue protein sequence, read N- to C-terminus: DENN domain-containing protein 5A (1287 aa).

A uDENN domain is found at 57-259 (STTEGENFEQ…EVPLPPPGRS (203 aa)). Ser-193 is subject to Phosphoserine. Residues 278–414 (ELPLFDFPVK…LEFVQEVSEI (137 aa)) enclose the cDENN domain. The region spanning 416 to 598 (MAFGVPPEGN…IMCHDDDDKD (183 aa)) is the dDENN domain. Residues 787-950 (VEENTLIASL…DYFCFTNVFT (164 aa)) form the RUN 1 domain. Residues 954-1062 (IPYHILIVPS…DDGSLERVLV (109 aa)) form the PLAT domain. Thr-1079 is modified (phosphothreonine). Phosphoserine is present on residues Ser-1085, Ser-1087, and Ser-1096. The 147-residue stretch at 1134–1280 (TLLLCGECGL…QEFNITLDTS (147 aa)) folds into the RUN 2 domain.

The protein belongs to the RAB6IP1 family. As to quaternary structure, interacts with RAB6A bound to GTP.

Its subcellular location is the golgi apparatus membrane. Guanine nucleotide exchange factor (GEF) which may activate RAB6A and RAB39A and/or RAB39B. Promotes the exchange of GDP to GTP, converting inactive GDP-bound Rab proteins into their active GTP-bound form. Involved in the negative regulation of neurite outgrowth. This Mus musculus (Mouse) protein is DENN domain-containing protein 5A (Dennd5a).